Reading from the N-terminus, the 444-residue chain is Argininosuccinate synthase (444 aa).

Residues 18–26 (AFSGGLDTS) and alanine 44 each bind ATP. Residue tyrosine 100 participates in L-citrulline binding. 2 residues coordinate ATP: glycine 130 and threonine 132. Positions 132, 136, and 137 each coordinate L-aspartate. Asparagine 136 serves as a coordination point for L-citrulline. Aspartate 137 lines the ATP pocket. L-citrulline is bound by residues arginine 140 and serine 193. An ATP-binding site is contributed by aspartate 195. Residues threonine 202, glutamate 204, and glutamate 281 each contribute to the L-citrulline site.

The protein belongs to the argininosuccinate synthase family. Type 2 subfamily. Homotetramer.

Its subcellular location is the cytoplasm. It carries out the reaction L-citrulline + L-aspartate + ATP = 2-(N(omega)-L-arginino)succinate + AMP + diphosphate + H(+). The protein operates within amino-acid biosynthesis; L-arginine biosynthesis; L-arginine from L-ornithine and carbamoyl phosphate: step 2/3. This Histophilus somni (strain 129Pt) (Haemophilus somnus) protein is Argininosuccinate synthase.